Consider the following 122-residue polypeptide: MIQVESALQVADNSGAKKVACIKVLGGSKRRYASVGDVIVVSVKEALPHSKVKKGDVMKAVVVRTAKEIRRNDGSYIKFDTNAAVLLNKQGEPVGTRIFGPVARELRARNYMKIVSLAPEVL.

Belongs to the universal ribosomal protein uL14 family. In terms of assembly, part of the 50S ribosomal subunit. Forms a cluster with proteins L3 and L19. In the 70S ribosome, L14 and L19 interact and together make contacts with the 16S rRNA in bridges B5 and B8.

In terms of biological role, binds to 23S rRNA. Forms part of two intersubunit bridges in the 70S ribosome. The protein is Large ribosomal subunit protein uL14 of Oleidesulfovibrio alaskensis (strain ATCC BAA-1058 / DSM 17464 / G20) (Desulfovibrio alaskensis).